Consider the following 221-residue polypeptide: Stromal cell-derived factor 2-like protein 1 (221 aa).

Positions 1 to 28 are cleaved as a signal peptide; sequence MWGASRGRVAGPTLLGLLLALSVRSGGA. 3 consecutive MIR domains span residues 33 to 87, 95 to 150, and 151 to 205; these read AGLV…IRGG, GLPV…VRCS, and GQHW…AMEG. At Ser215 the chain carries Phosphoserine. Residues 218 to 221 carry the Prevents secretion from ER motif; sequence HDEL.

Ubiquitously expressed with high expression in the testis, ovary, uterus, and low expression in heart and skeletal muscle.

It is found in the endoplasmic reticulum lumen. This chain is Stromal cell-derived factor 2-like protein 1 (Sdf2l1), found in Mus musculus (Mouse).